A 1415-amino-acid polypeptide reads, in one-letter code: DNA-directed RNA polymerase subunit beta' (1415 aa).

The Zn(2+) site is built by C70, C72, C85, and C88. The Mg(2+) site is built by D461, D463, and D465. C820, C894, C901, and C904 together coordinate Zn(2+). The disordered stretch occupies residues 1382 to 1415 (ERERAQAIADEEQSLFIEPPPVVQATTEGEGDNA).

This sequence belongs to the RNA polymerase beta' chain family. The RNAP catalytic core consists of 2 alpha, 1 beta, 1 beta' and 1 omega subunit. When a sigma factor is associated with the core the holoenzyme is formed, which can initiate transcription. Requires Mg(2+) as cofactor. It depends on Zn(2+) as a cofactor.

It catalyses the reaction RNA(n) + a ribonucleoside 5'-triphosphate = RNA(n+1) + diphosphate. In terms of biological role, DNA-dependent RNA polymerase catalyzes the transcription of DNA into RNA using the four ribonucleoside triphosphates as substrates. The polypeptide is DNA-directed RNA polymerase subunit beta' (Cupriavidus pinatubonensis (strain JMP 134 / LMG 1197) (Cupriavidus necator (strain JMP 134))).